The chain runs to 397 residues: Ribosomal RNA large subunit methyltransferase I (397 aa).

The PUA domain occupies 2 to 79 (TAAIYLVKGR…KEEINKAFFV (78 aa)).

Belongs to the methyltransferase superfamily. RlmI family.

Its subcellular location is the cytoplasm. It catalyses the reaction cytidine(1962) in 23S rRNA + S-adenosyl-L-methionine = 5-methylcytidine(1962) in 23S rRNA + S-adenosyl-L-homocysteine + H(+). In terms of biological role, specifically methylates the cytosine at position 1962 (m5C1962) of 23S rRNA. This chain is Ribosomal RNA large subunit methyltransferase I, found in Vibrio parahaemolyticus serotype O3:K6 (strain RIMD 2210633).